The sequence spans 592 residues: Probable oxidoreductase EphD (592 aa).

The AB hydrolase-1 domain occupies 30–286; sequence PTVVLVHGFP…KAGHFSPMSH (257 aa). Residue Ser461 coordinates substrate. Tyr474 serves as the catalytic Proton acceptor.

The protein belongs to the short-chain dehydrogenases/reductases (SDR) family.

This chain is Probable oxidoreductase EphD (ephD), found in Mycobacterium bovis (strain ATCC BAA-935 / AF2122/97).